We begin with the raw amino-acid sequence, 180 residues long: Shikimate kinase (180 aa).

14 to 19 (GAGKSC) contacts ATP. Mg(2+) is bound at residue Ser18. Residues Asp36, Arg60, and Gly82 each contribute to the substrate site. Arg120 provides a ligand contact to ATP. Arg139 contacts substrate.

Belongs to the shikimate kinase family. Monomer. Mg(2+) is required as a cofactor.

It is found in the cytoplasm. It carries out the reaction shikimate + ATP = 3-phosphoshikimate + ADP + H(+). Its pathway is metabolic intermediate biosynthesis; chorismate biosynthesis; chorismate from D-erythrose 4-phosphate and phosphoenolpyruvate: step 5/7. Functionally, catalyzes the specific phosphorylation of the 3-hydroxyl group of shikimic acid using ATP as a cosubstrate. The polypeptide is Shikimate kinase (Xanthomonas oryzae pv. oryzae (strain PXO99A)).